Reading from the N-terminus, the 917-residue chain is MLNNLLKKVFGSRNDRLIKQYSQNVTAINALEAKIGALSDAELRGKTEEFRQRIGEGADLDMLLPEAFAVVREAGKRVLGMRHFDVQLIGGMVLHDGKIAEMRTGEGKTLMATLPAYLNALAGKGVHLVTVNDYLAKRDAEWMGRIYRFLGISVGVILSQMDHGDKQAAYAADITYGTNNEYGFDYLRDNMVTHPLERVQRVLNFAIVDEVDSILIDEARTPLIISGQAEGNTDVYVRMNALIPKLVRQENEDSPGDFSVDEKAQQVLLSEAGFEHAEKLLVQSGLLPSGTSLYDPANINLVHHLYAGLRAHALFHRDQHYVIQNGEVVIVDEFTGRLMAGRRWSEGLHQAVEAKEGVTIQKENQTLASITFQNYFRMYEKLAGMTGTADTEAYEFQQIYGLETVIIPTHRPMIRVDRMDQVFRTMDEKYQAIIADIKDCQERGQPVLVGTTSIENNELLSSLLTREKLPHQVLNAKQHAREAEIVAQAGRPKMITIATNMAGRGTDIVLGGNPEPEFERIRSDESLSESEKTERIAELQQQWQTLHDEVLEKGGLHIIGTERHESRRVDNQLRGRSGRQGDPGSSRFYLSLEDALLRIFASDRVASIMQRLNMPQGEAIEHPWVTRAIENAQRKVEARNFDIRKQLLEYDDVANDQRKVIYQQRNELLESEDITETTTAMRADMLRNLIALHVPPQSVEEEWDISGLEKALAAEYHLTLPLREWLEKEPDLHEDSLHQRIIEAANALYSGKVEQVGAPIMHQYERAVMLQSLDMHWREHLASLDHLRQGIHLRGYAQKNPKQEYKREAFELFTSMLEEIKAEVSKTLMAVQIRSEQQVEAVAETHHAPVNVQYHHAAFEEALGEEKSPESIGEDIEGREHPQKHQPFVRQGEKIGRNDPCPCGSGKKYKQCHGKLN.

ATP-binding positions include Gln87, 105–109 (GEGKT), and Asp507. A disordered region spans residues 866–917 (EKSPESIGEDIEGREHPQKHQPFVRQGEKIGRNDPCPCGSGKKYKQCHGKLN). Cys901, Cys903, Cys912, and His913 together coordinate Zn(2+). Residues 907 to 917 (KKYKQCHGKLN) are compositionally biased toward basic residues.

This sequence belongs to the SecA family. Monomer and homodimer. Part of the essential Sec protein translocation apparatus which comprises SecA, SecYEG and auxiliary proteins SecDF-YajC and YidC. Zn(2+) is required as a cofactor.

It localises to the cell inner membrane. The protein resides in the cytoplasm. It catalyses the reaction ATP + H2O + cellular proteinSide 1 = ADP + phosphate + cellular proteinSide 2.. Part of the Sec protein translocase complex. Interacts with the SecYEG preprotein conducting channel. Has a central role in coupling the hydrolysis of ATP to the transfer of proteins into and across the cell membrane, serving both as a receptor for the preprotein-SecB complex and as an ATP-driven molecular motor driving the stepwise translocation of polypeptide chains across the membrane. The protein is Protein translocase subunit SecA 1 of Nitrosospira multiformis (strain ATCC 25196 / NCIMB 11849 / C 71).